The sequence spans 258 residues: Ribose-5-phosphate isomerase (258 aa).

It belongs to the ribose 5-phosphate isomerase family.

Its subcellular location is the cytoplasm. The catalysed reaction is aldehydo-D-ribose 5-phosphate = D-ribulose 5-phosphate. It participates in carbohydrate degradation; pentose phosphate pathway; D-ribose 5-phosphate from D-ribulose 5-phosphate (non-oxidative stage): step 1/1. This chain is Ribose-5-phosphate isomerase (RKI1), found in Saccharomyces cerevisiae (strain YJM789) (Baker's yeast).